Here is a 155-residue protein sequence, read N- to C-terminus: Ribosomal RNA large subunit methyltransferase H (155 aa).

Residues Ile71, Gly103, and 122 to 127 each bind S-adenosyl-L-methionine; that span reads FGRMVW.

It belongs to the RNA methyltransferase RlmH family. Homodimer.

The protein localises to the cytoplasm. The catalysed reaction is pseudouridine(1915) in 23S rRNA + S-adenosyl-L-methionine = N(3)-methylpseudouridine(1915) in 23S rRNA + S-adenosyl-L-homocysteine + H(+). In terms of biological role, specifically methylates the pseudouridine at position 1915 (m3Psi1915) in 23S rRNA. The sequence is that of Ribosomal RNA large subunit methyltransferase H from Cereibacter sphaeroides (strain ATCC 17025 / ATH 2.4.3) (Rhodobacter sphaeroides).